Reading from the N-terminus, the 185-residue chain is Ribosome-recycling factor (185 aa).

Residues 137–159 (EDLKADEKAKDISEDDRKRMEDE) form a disordered region.

This sequence belongs to the RRF family.

The protein localises to the cytoplasm. In terms of biological role, responsible for the release of ribosomes from messenger RNA at the termination of protein biosynthesis. May increase the efficiency of translation by recycling ribosomes from one round of translation to another. The polypeptide is Ribosome-recycling factor (Erythrobacter litoralis (strain HTCC2594)).